A 195-amino-acid chain; its full sequence is ATP-dependent Clp protease proteolytic subunit (195 aa).

S102 functions as the Nucleophile in the catalytic mechanism. H125 is a catalytic residue.

It belongs to the peptidase S14 family. Component of the chloroplastic Clp protease core complex.

The protein resides in the plastid. Its subcellular location is the chloroplast stroma. The catalysed reaction is Hydrolysis of proteins to small peptides in the presence of ATP and magnesium. alpha-casein is the usual test substrate. In the absence of ATP, only oligopeptides shorter than five residues are hydrolyzed (such as succinyl-Leu-Tyr-|-NHMec, and Leu-Tyr-Leu-|-Tyr-Trp, in which cleavage of the -Tyr-|-Leu- and -Tyr-|-Trp bonds also occurs).. Cleaves peptides in various proteins in a process that requires ATP hydrolysis. Has a chymotrypsin-like activity. Plays a major role in the degradation of misfolded proteins. In Phaseolus vulgaris (Kidney bean), this protein is ATP-dependent Clp protease proteolytic subunit.